The chain runs to 611 residues: Homeobox protein BEL1 homolog (611 aa).

Disordered stretches follow at residues 63 to 87 (QIRMTSGSDHHHHHHQTSGGTDQNQ), 101 to 133 (VNNDFPSEVNDERPPQRPSQGLSLSLSSSNPTS), 141 to 160 (LRPQQQQQQGYSGNKSTQHQ), and 174 to 195 (SHHQNNNNNNHQHHNHHQFQIG). The segment covering 118-133 (PSQGLSLSLSSSNPTS) has biased composition (low complexity). The span at 174–183 (SHHQNNNNNN) shows a compositional bias: low complexity. Positions 197-213 (SKYLSPAQELLSEFCSL) are SR/KY domain. The segment at 225 to 263 (MKHKKKQKGKQQEEWDTSHHSNNDQHDQSATTSSKKHVP) is disordered. Over residues 234–251 (KQQEEWDTSHHSNNDQHD) the composition is skewed to basic and acidic residues. Residues 269 to 340 (EFMELQKRKA…CLKDGLVGQI (72 aa)) form a BELL domain region. Positions 275 to 290 (KRKAKLLSMLEELKRR) match the Bipartite nuclear localization motif. Positions 391–453 (PWRPQRGLPE…NARVRLWKPM (63 aa)) form a DNA-binding region, homeobox.

It belongs to the TALE/BELL homeobox family. As to quaternary structure, may form heterodimeric complexes with TALE/KNOX proteins STM, KNAT1/BP, KNAT2 and KNAT5. Interacts with AG-SEP1 and AG-SEP3 dimers. Interacts with KNATM, isoform KNATM-B. Interacts with BZIP30. As to expression, expressed in both floral and vegetative tissues.

The protein localises to the nucleus. Its function is as follows. Plays a major role in ovule patterning and in determination of integument identity via its interaction with MADS-box factors. Formation of complex with AG-SEP dimers negatively regulates the carpel identity process and favors the maintenance of ovule identity. BEL1-STM complex maintains the indeterminacy of the inflorescence meristem. Required, with SPL, for cytokinin-induced PIN1 expression in ovules. The polypeptide is Homeobox protein BEL1 homolog (BEL1) (Arabidopsis thaliana (Mouse-ear cress)).